Consider the following 354-residue polypeptide: Lysine racemase (354 aa).

The residue at position 36 (lysine 36) is an N6-(pyridoxal phosphate)lysine.

The protein belongs to the alanine racemase family. Homodimer. Pyridoxal 5'-phosphate is required as a cofactor.

The catalysed reaction is L-lysine = D-lysine. It carries out the reaction L-ornithine = D-ornithine. It functions in the pathway cell wall biogenesis; peptidoglycan biosynthesis. In terms of biological role, catalyzes the interconversion of D-lysine and L-lysine. Has also high activity toward ornithine, and weaker activity toward alanine. Contributes to production of D-lysine and D-alanine for use as peptidoglycan components. The sequence is that of Lysine racemase from Thermotoga maritima (strain ATCC 43589 / DSM 3109 / JCM 10099 / NBRC 100826 / MSB8).